The sequence spans 352 residues: UDP-N-acetylglucosamine--N-acetylmuramyl-(pentapeptide) pyrophosphoryl-undecaprenol N-acetylglucosamine transferase (352 aa).

UDP-N-acetyl-alpha-D-glucosamine is bound by residues S195 and Q287.

The protein belongs to the glycosyltransferase 28 family. MurG subfamily.

The protein resides in the cell membrane. The enzyme catalyses Mur2Ac(oyl-L-Ala-gamma-D-Glu-L-Lys-D-Ala-D-Ala)-di-trans,octa-cis-undecaprenyl diphosphate + UDP-N-acetyl-alpha-D-glucosamine = beta-D-GlcNAc-(1-&gt;4)-Mur2Ac(oyl-L-Ala-gamma-D-Glu-L-Lys-D-Ala-D-Ala)-di-trans,octa-cis-undecaprenyl diphosphate + UDP + H(+). Its pathway is cell wall biogenesis; peptidoglycan biosynthesis. In terms of biological role, cell wall formation. Catalyzes the transfer of a GlcNAc subunit on undecaprenyl-pyrophosphoryl-MurNAc-pentapeptide (lipid intermediate I) to form undecaprenyl-pyrophosphoryl-MurNAc-(pentapeptide)GlcNAc (lipid intermediate II). This chain is UDP-N-acetylglucosamine--N-acetylmuramyl-(pentapeptide) pyrophosphoryl-undecaprenol N-acetylglucosamine transferase, found in Streptococcus pneumoniae (strain Hungary19A-6).